The chain runs to 50 residues: Large ribosomal subunit protein bL33 (50 aa).

This sequence belongs to the bacterial ribosomal protein bL33 family.

The polypeptide is Large ribosomal subunit protein bL33 (Endomicrobium trichonymphae).